The primary structure comprises 119 residues: Large ribosomal subunit protein bL17 (119 aa).

It belongs to the bacterial ribosomal protein bL17 family. Part of the 50S ribosomal subunit. Contacts protein L32.

The polypeptide is Large ribosomal subunit protein bL17 (Malacoplasma penetrans (strain HF-2) (Mycoplasma penetrans)).